Here is a 276-residue protein sequence, read N- to C-terminus: Large ribosomal subunit protein uL2 (276 aa).

The disordered stretch occupies residues 210-276 (GRNRHRGIRP…KLIISRRKGK (67 aa)). The span at 230-240 (DHPHGGGEGKK) shows a compositional bias: basic and acidic residues. Residues 255–276 (KGAKTRRKKASDKLIISRRKGK) are compositionally biased toward basic residues.

It belongs to the universal ribosomal protein uL2 family. As to quaternary structure, part of the 50S ribosomal subunit. Forms a bridge to the 30S subunit in the 70S ribosome.

Functionally, one of the primary rRNA binding proteins. Required for association of the 30S and 50S subunits to form the 70S ribosome, for tRNA binding and peptide bond formation. It has been suggested to have peptidyltransferase activity; this is somewhat controversial. Makes several contacts with the 16S rRNA in the 70S ribosome. In Campylobacter jejuni subsp. jejuni serotype O:6 (strain 81116 / NCTC 11828), this protein is Large ribosomal subunit protein uL2.